We begin with the raw amino-acid sequence, 103 residues long: UPF0145 protein CYA_2258 (103 aa).

It belongs to the UPF0145 family.

The chain is UPF0145 protein CYA_2258 from Synechococcus sp. (strain JA-3-3Ab) (Cyanobacteria bacterium Yellowstone A-Prime).